The chain runs to 167 residues: NAD(P)H-quinone oxidoreductase subunit I, chloroplastic (167 aa).

4Fe-4S ferredoxin-type domains follow at residues 55 to 84 and 95 to 124; these read GRIH…VDWK and LNYS…MTEE. Cys-64, Cys-67, Cys-70, Cys-74, Cys-104, Cys-107, Cys-110, and Cys-114 together coordinate [4Fe-4S] cluster.

This sequence belongs to the complex I 23 kDa subunit family. As to quaternary structure, NDH is composed of at least 16 different subunits, 5 of which are encoded in the nucleus. The cofactor is [4Fe-4S] cluster.

It is found in the plastid. Its subcellular location is the chloroplast thylakoid membrane. The catalysed reaction is a plastoquinone + NADH + (n+1) H(+)(in) = a plastoquinol + NAD(+) + n H(+)(out). It carries out the reaction a plastoquinone + NADPH + (n+1) H(+)(in) = a plastoquinol + NADP(+) + n H(+)(out). Functionally, NDH shuttles electrons from NAD(P)H:plastoquinone, via FMN and iron-sulfur (Fe-S) centers, to quinones in the photosynthetic chain and possibly in a chloroplast respiratory chain. The immediate electron acceptor for the enzyme in this species is believed to be plastoquinone. Couples the redox reaction to proton translocation, and thus conserves the redox energy in a proton gradient. The polypeptide is NAD(P)H-quinone oxidoreductase subunit I, chloroplastic (Barbarea verna (Land cress)).